The chain runs to 276 residues: NADPH-dependent 7-cyano-7-deazaguanine reductase (276 aa).

Position 83–85 (83–85 (IES)) interacts with substrate. 85–86 (SK) is an NADPH binding site. The Thioimide intermediate role is filled by Cys-184. Residue Asp-191 is the Proton donor of the active site. Position 223 to 224 (223 to 224 (HE)) interacts with substrate. 252–253 (RG) serves as a coordination point for NADPH.

The protein belongs to the GTP cyclohydrolase I family. QueF type 2 subfamily. Homodimer.

Its subcellular location is the cytoplasm. It carries out the reaction 7-aminomethyl-7-carbaguanine + 2 NADP(+) = 7-cyano-7-deazaguanine + 2 NADPH + 3 H(+). It participates in tRNA modification; tRNA-queuosine biosynthesis. In terms of biological role, catalyzes the NADPH-dependent reduction of 7-cyano-7-deazaguanine (preQ0) to 7-aminomethyl-7-deazaguanine (preQ1). This chain is NADPH-dependent 7-cyano-7-deazaguanine reductase, found in Pseudomonas syringae pv. tomato (strain ATCC BAA-871 / DC3000).